The sequence spans 293 residues: SAGA-associated factor 29 (293 aa).

A coiled-coil region spans residues 3–88; that stretch reads LVSADSRIAE…KALDKIAEIK (86 aa). Positions 152-293 constitute an SGF29 C-terminal domain; the sequence is GDYVARPGDK…VVACKEPKKK (142 aa). Histone H3K4me3 N-terminus binding stretches follow at residues 194–196 and 240–243; these read DID and QTTC. The segment at 264–266 is histone H3K4me3 binding; sequence FED. An N6-acetyllysine modification is found at lysine 288.

Belongs to the SGF29 family. In terms of assembly, interacts with dimethylated and trimethylated 'Lys-4' of histone H3 (H3K4me2 and H3K4me3), with a preference for the trimethylated form (H3K4me3). Component of some SAGA-type complexes. Component of the ADA2A-containing complex (ATAC), composed of KAT14, KAT2A, TADA2L, TADA3L, ZZ3, MBIP, WDR5, YEATS2, CCDC101 and DR1. Interacts with (methylated) CGAS. Interacts with TADA3L, GCN5L2, SUPT3H and MYC.

Its subcellular location is the nucleus. Functionally, chromatin reader component of some histone acetyltransferase (HAT) SAGA-type complexes like the TFTC-HAT, ATAC or STAGA complexes. SGF29 specifically recognizes and binds methylated 'Lys-4' of histone H3 (H3K4me), with a preference for trimethylated form (H3K4me3). In the SAGA-type complexes, SGF29 is required to recruit complexes to H3K4me. Involved in the response to endoplasmic reticulum (ER) stress by recruiting the SAGA complex to H3K4me, thereby promoting histone H3 acetylation and cell survival. Also binds non-histone proteins that are methylated on Lys residues: specifically recognizes and binds CGAS monomethylated on 'Lys-506'. The protein is SAGA-associated factor 29 of Homo sapiens (Human).